We begin with the raw amino-acid sequence, 226 residues long: Ribonuclease S-7 (226 aa).

Residues 1–27 form the signal peptide; that stretch reads MGITGMIYIVTMVFSLIVLILSSSTVG. RNA is bound at residue Gln-36. An intrachain disulfide couples Cys-42 to Cys-49. His-60 lines the RNA pocket. His-60 acts as the Proton donor in catalysis. Asn-74 and Asn-77 each carry an N-linked (GlcNAc...) asparagine; alternate glycan. A disulfide bridge connects residues Cys-75 and Cys-119. RNA is bound by residues 98-99, Phe-108, 111-112, and 115-116; these read NV, KQ, and KH. Gln-112 is an active-site residue. His-116 functions as the Proton acceptor in the catalytic mechanism. N-linked (GlcNAc...) asparagine glycosylation is found at Asn-126, Asn-144, and Asn-172. Disulfide bonds link Cys-183–Cys-220 and Cys-198–Cys-209.

It belongs to the RNase T2 family. The N-glycans attached at Asn-74 and Asn-77 consist of either monosaccharide (GlcNAc) or disaccharide (GlcNAc-GlcNAc) that could not be distinguished. The N-glycan at Asn-144 contains mannose and xylose, and at Asn-126 contains mannose, xylose and fucose. The N-glycan at Asn-172 consists of disaccharide (GlcNAc-GlcNAc).

It catalyses the reaction a ribonucleotidyl-ribonucleotide-RNA + H2O = a 3'-end 3'-phospho-ribonucleotide-RNA + a 5'-end dephospho-ribonucleoside-RNA + H(+). Its function is as follows. Self-incompatibility (SI) is the inherited ability of a flowering plant to prevent self-fertilization by discriminating between self and non-self pollen during pollination. In many species, self-incompatibility is controlled by the single, multiallelic locus S. This is Ribonuclease S-7 from Pyrus pyrifolia (Chinese pear).